We begin with the raw amino-acid sequence, 292 residues long: Acetyl-coenzyme A carboxylase carboxyl transferase subunit beta (292 aa).

A CoA carboxyltransferase N-terminal domain is found at 29–292 (LWVKCSECGQ…HGVKDLMGAN (264 aa)). C33, C36, C52, and C55 together coordinate Zn(2+). The C4-type zinc-finger motif lies at 33–55 (CSECGQVAYRKDLISNFNVCSNC).

This sequence belongs to the AccD/PCCB family. Acetyl-CoA carboxylase is a heterohexamer composed of biotin carboxyl carrier protein (AccB), biotin carboxylase (AccC) and two subunits each of ACCase subunit alpha (AccA) and ACCase subunit beta (AccD). Requires Zn(2+) as cofactor.

It is found in the cytoplasm. It carries out the reaction N(6)-carboxybiotinyl-L-lysyl-[protein] + acetyl-CoA = N(6)-biotinyl-L-lysyl-[protein] + malonyl-CoA. It participates in lipid metabolism; malonyl-CoA biosynthesis; malonyl-CoA from acetyl-CoA: step 1/1. In terms of biological role, component of the acetyl coenzyme A carboxylase (ACC) complex. Biotin carboxylase (BC) catalyzes the carboxylation of biotin on its carrier protein (BCCP) and then the CO(2) group is transferred by the transcarboxylase to acetyl-CoA to form malonyl-CoA. This is Acetyl-coenzyme A carboxylase carboxyl transferase subunit beta from Prochlorococcus marinus (strain MIT 9515).